Here is a 340-residue protein sequence, read N- to C-terminus: Dihydroorotate dehydrogenase (quinone) (340 aa).

FMN contacts are provided by residues 61–65 and threonine 85; that span reads AGLDK. Lysine 65 contacts substrate. Substrate is bound at residue 110-114; the sequence is NRMGF. FMN-binding residues include asparagine 138 and asparagine 171. Residue asparagine 171 coordinates substrate. Catalysis depends on serine 174, which acts as the Nucleophile. Residue asparagine 176 participates in substrate binding. Positions 216 and 244 each coordinate FMN. 245 to 246 provides a ligand contact to substrate; it reads NT. Residues glycine 267, glycine 296, and 317-318 each bind FMN; that span reads YS.

It belongs to the dihydroorotate dehydrogenase family. Type 2 subfamily. In terms of assembly, monomer. The cofactor is FMN.

It localises to the cell membrane. It catalyses the reaction (S)-dihydroorotate + a quinone = orotate + a quinol. It participates in pyrimidine metabolism; UMP biosynthesis via de novo pathway; orotate from (S)-dihydroorotate (quinone route): step 1/1. Catalyzes the conversion of dihydroorotate to orotate with quinone as electron acceptor. This Pseudomonas putida (strain ATCC 47054 / DSM 6125 / CFBP 8728 / NCIMB 11950 / KT2440) protein is Dihydroorotate dehydrogenase (quinone).